A 547-amino-acid chain; its full sequence is CDK5RAP1-like protein (547 aa).

Residues 79 to 194 (RTVCYVTYGC…LPRLVAVAAG (116 aa)) form the MTTase N-terminal domain. [4Fe-4S] cluster-binding residues include Cys-88, Cys-124, Cys-157, Cys-232, Cys-236, and Cys-239. Residues 218 to 475 (DSASKTAFIS…TTVFREEALK (258 aa)) form the Radical SAM core domain. The region spanning 478–543 (QALIGSEQTV…SQTLKAQLIG (66 aa)) is the TRAM domain.

Belongs to the methylthiotransferase family. MiaB subfamily. [4Fe-4S] cluster is required as a cofactor.

Potential regulator of CDK5 activity. This is CDK5RAP1-like protein from Caenorhabditis elegans.